We begin with the raw amino-acid sequence, 657 residues long: MNKTCARCQKVVYPIEELKCLDKTWHKTCFKCTECGMTLNMKTYKGYNKMPYCEAHIPKAKATAIADTPELKRIAENTKIQSNVKYHADFEKAKGKFTQVADDPETLRIKQNTKHISNVAYHGDLEKKAAMEKQRGSAEVSDSSNESEYFSEQLAAEQFSQYAPTASPIPPAATTLHQQQQQLQHQQQQQYQQHQQQLQQQQHQHQHYLQQQQQTLPPPPIQHQQYNTAAITPTYQQLQQQQQQQQQQRAQQQQLHDPYAHYQQPQALRQQQQQQQQQQQQLLQQQAIKQASHLYPTATSQQQQMPPPQSPANPQQQALNSYNEMRSAILQNSHHPSGNSVDQYDQPQQQQHQPQQQSTNPTLVAAQQQQSHHSLLNNNASNGGISHSHHSNINNNGHGSQNQMLPPQMRRSAASVVAYDGNSKQQVAAGPGAAQNHLQQLYASPNYAAVTPSENSINVKQHASNGHMPNQQQQHVAGGSNIGKIADYDPLTDGPRVVPNAGRSSTTLVYSSEPRGNQGGNSVYPKRIGSVSDIDPANGIYGSLTAAEQAHQQQKHQQYYQQVQMMQQQEHPPQQQQMRQQPSYSSLQEKQSRQSTAMRVYRAIYDYEAQDVDEVSFREGDVIFEVESIDSGWMTGRVERTGKTGMLPANYVEQAVI.

The LIM zinc-binding domain maps to 3-63 (KTCARCQKVV…EAHIPKAKAT (61 aa)). Nebulin repeat units follow at residues 64–95 (AIAD…KAKG) and 96–130 (KFTQ…KKAA). Disordered stretches follow at residues 130–151 (AMEK…EYFS), 164–223 (PTAS…PIQH), 235–257 (YQQL…QLHD), 294–318 (LYPT…QQQA), 332–415 (NSHH…SAAS), and 460–528 (KQHA…PKRI). The span at 140-150 (VSDSSNESEYF) shows a compositional bias: polar residues. 2 stretches are compositionally biased toward low complexity: residues 172 to 215 (AATT…QQQT) and 236 to 254 (QQLQ…QQQQ). The segment covering 332–341 (NSHHPSGNSV) has biased composition (polar residues). The segment covering 342-357 (DQYDQPQQQQHQPQQQ) has biased composition (low complexity). A compositionally biased stretch (polar residues) spans 358–370 (STNPTLVAAQQQQ). Over residues 371-403 (SHHSLLNNNASNGGISHSHHSNINNNGHGSQNQ) the composition is skewed to low complexity. Residues 460-475 (KQHASNGHMPNQQQQH) are compositionally biased toward polar residues. A phosphoserine mark is found at S505 and S530. The interval 548–592 (EQAHQQQKHQQYYQQVQMMQQQEHPPQQQQMRQQPSYSSLQEKQS) is disordered. The span at 549–586 (QAHQQQKHQQYYQQVQMMQQQEHPPQQQQMRQQPSYSS) shows a compositional bias: low complexity. Positions 596 to 657 (TAMRVYRAIY…PANYVEQAVI (62 aa)) constitute an SH3 domain.

Interacts with osk.

This is LIM and SH3 domain protein Lasp from Drosophila melanogaster (Fruit fly).